Here is a 194-residue protein sequence, read N- to C-terminus: Methylated-DNA--protein-cysteine methyltransferase (194 aa).

The DNA site is built by Y125 and R139. Residue C156 is the Nucleophile; methyl group acceptor of the active site. S162 lines the DNA pocket.

It belongs to the MGMT family.

It localises to the nucleus. The enzyme catalyses a 6-O-methyl-2'-deoxyguanosine in DNA + L-cysteinyl-[protein] = S-methyl-L-cysteinyl-[protein] + a 2'-deoxyguanosine in DNA. The catalysed reaction is a 4-O-methyl-thymidine in DNA + L-cysteinyl-[protein] = a thymidine in DNA + S-methyl-L-cysteinyl-[protein]. Its function is as follows. Involved in the cellular defense against the biological effects of O6-methylguanine (O6-MeG) and O4-methylthymine (O4-MeT) in DNA. Repairs the methylated nucleobase in DNA by stoichiometrically transferring the methyl group to a cysteine residue in the enzyme. This is a suicide reaction: the enzyme is irreversibly inactivated. The sequence is that of Methylated-DNA--protein-cysteine methyltransferase (MGT1) from Scheffersomyces stipitis (strain ATCC 58785 / CBS 6054 / NBRC 10063 / NRRL Y-11545) (Yeast).